The chain runs to 253 residues: Tetraspanin-11 (253 aa).

A run of 3 helical transmembrane segments spans residues 19 to 39 (LLFIFNFFFWVGGAAVMAVGI), 63 to 83 (ILIFVGGLVMTTGFLGFGAII), and 93 to 113 (YFCLLLVIFLVELVAGVLAHV). An N-linked (GlcNAc...) asparagine glycan is attached at Asn127. A helical membrane pass occupies residues 220-240 (LLLMGAVGIGVACLQICGMVL).

The protein belongs to the tetraspanin (TM4SF) family.

The protein localises to the membrane. This chain is Tetraspanin-11 (Tspan11), found in Mus musculus (Mouse).